The primary structure comprises 405 residues: Putative aminotransferase AatC (405 aa).

Lys-238 carries the N6-(pyridoxal phosphate)lysine modification.

This sequence belongs to the class-I pyridoxal-phosphate-dependent aminotransferase family. In terms of assembly, homodimer. It depends on pyridoxal 5'-phosphate as a cofactor.

The protein localises to the cytoplasm. The polypeptide is Putative aminotransferase AatC (aatC) (Rhizobium meliloti (strain 1021) (Ensifer meliloti)).